The primary structure comprises 288 residues: Nucleotide-binding protein APP7_0339 (288 aa).

8–15 (GRSGSGKS) lines the ATP pocket. 56–59 (DIRN) lines the GTP pocket.

The protein belongs to the RapZ-like family.

In terms of biological role, displays ATPase and GTPase activities. This chain is Nucleotide-binding protein APP7_0339, found in Actinobacillus pleuropneumoniae serotype 7 (strain AP76).